The sequence spans 296 residues: Trimeric intracellular cation channel type A (296 aa).

Residues Met-1 to Val-19 are Lumenal-facing. The chain crosses the membrane as a helical span at residues Pro-20 to Leu-37. The Cytoplasmic portion of the chain corresponds to Lys-38–Pro-51. Residues Phe-52–Leu-73 traverse the membrane as a helical segment. A Ca(2+)-binding site is contributed by Gly-74. The Lumenal portion of the chain corresponds to Gly-74 to Ser-85. A helical membrane pass occupies residues Ser-86 to Asn-103. At Leu-104–Lys-107 the chain is on the cytoplasmic side. A helical transmembrane segment spans residues Cys-108–Arg-126. Residues Lys-122 and Arg-126 each contribute to the a 1,2-diacyl-sn-glycero-3-phospho-(1D-myo-inositol-4,5-bisphosphate) site. Residues Val-127–Gly-144 are Lumenal-facing. Residues Trp-145–Met-162 form a helical membrane-spanning segment. Over Ser-163–Met-183 the chain is Cytoplasmic. Residues Ser-184–Gln-201 traverse the membrane as a helical segment. The Lumenal portion of the chain corresponds to Thr-202–Glu-209. Residues Ala-210–Thr-230 form a helical membrane-spanning segment. The Cytoplasmic segment spans residues His-231–Pro-273. The segment at His-256–Glu-296 is disordered. Over residues Lys-278–Thr-287 the composition is skewed to basic and acidic residues.

This sequence belongs to the TMEM38 family. In terms of assembly, homotrimer; conformation seems to be controled by binding to diacylglycerol (DAG).

The protein resides in the sarcoplasmic reticulum membrane. It localises to the nucleus membrane. It carries out the reaction K(+)(in) = K(+)(out). Channel activity is activated by a change of voltage within the sarcoplasmic reticulum lumen and blocked by luminal high Ca(2+) levels. Intracellular monovalent cation channel required for maintenance of rapid intracellular calcium release. Acts as a potassium counter-ion channel that functions in synchronization with calcium release from intracellular stores. Opened by a change of voltage within the sarcoplasmic reticulum lumen. The protein is Trimeric intracellular cation channel type A (TMEM38A) of Gallus gallus (Chicken).